A 560-amino-acid chain; its full sequence is MAENWRSRIITEGIQRTPNRAMLRAVGFGDEDFNKPIVGVASAHSTITPCNMGIAALASRAEAGIRAAGGMPQLFGTITVSDGISMGTEGMKYSLVSRDVIADSIETVCNAQSMDGVLAIGGCDKNMPGAMIAMARMNIPAIFVYGGTIKPGHWQGQDLTVVSAFEAVGQFSAGKMDEATLHAIEHHACPGAGSCGGMFTANTMSSAFEAMGMSLMYSSTMTAEDAEKADSTELAGKVLVEAIRKNIRPRDIITRKSIENAISVIMAVGGSTNAVLHFLAIAHSAEVPLTIDDFETIRQRVPVLCDLKPSGKYVTADLHRAGGIPQVMKMLLNAGLLHGDCLTITGETIAERLRHVPDTPDPNQDVIRPFDQPLYATGHLAILKGNLASEGAVAKISGVKNPQITGPARVFDSEEDCLDAILAGKINPGDVIVIRYEGPVGGPGMREMLAPTSAIIGAGLGDSVGLITDGRFSGGTYGMVVGHVAPEAAVGGTIALVQEGDSITIDAHRRLLQLNVSEEELAARRAKWQPPAPRYTRGVLAKYAKLVSSSSLGAVTDRFV.

Cys50 serves as a coordination point for [2Fe-2S] cluster. Asp82 serves as a coordination point for Mg(2+). Cys123 is a [2Fe-2S] cluster binding site. Positions 124 and 125 each coordinate Mg(2+). An N6-carboxylysine modification is found at Lys125. Cys195 is a [2Fe-2S] cluster binding site. Residue Glu447 participates in Mg(2+) binding. Ser473 functions as the Proton acceptor in the catalytic mechanism.

The protein belongs to the IlvD/Edd family. As to quaternary structure, homodimer. [2Fe-2S] cluster serves as cofactor. It depends on Mg(2+) as a cofactor.

The enzyme catalyses (2R)-2,3-dihydroxy-3-methylbutanoate = 3-methyl-2-oxobutanoate + H2O. It carries out the reaction (2R,3R)-2,3-dihydroxy-3-methylpentanoate = (S)-3-methyl-2-oxopentanoate + H2O. The protein operates within amino-acid biosynthesis; L-isoleucine biosynthesis; L-isoleucine from 2-oxobutanoate: step 3/4. Its pathway is amino-acid biosynthesis; L-valine biosynthesis; L-valine from pyruvate: step 3/4. Functions in the biosynthesis of branched-chain amino acids. Catalyzes the dehydration of (2R,3R)-2,3-dihydroxy-3-methylpentanoate (2,3-dihydroxy-3-methylvalerate) into 2-oxo-3-methylpentanoate (2-oxo-3-methylvalerate) and of (2R)-2,3-dihydroxy-3-methylbutanoate (2,3-dihydroxyisovalerate) into 2-oxo-3-methylbutanoate (2-oxoisovalerate), the penultimate precursor to L-isoleucine and L-valine, respectively. The sequence is that of Dihydroxy-acid dehydratase from Thermosynechococcus vestitus (strain NIES-2133 / IAM M-273 / BP-1).